The chain runs to 155 residues: Ribosomal RNA large subunit methyltransferase H (155 aa).

S-adenosyl-L-methionine is bound by residues Gly104 and 123–128; that span reads FGNITL.

It belongs to the RNA methyltransferase RlmH family. As to quaternary structure, homodimer.

Its subcellular location is the cytoplasm. It catalyses the reaction pseudouridine(1915) in 23S rRNA + S-adenosyl-L-methionine = N(3)-methylpseudouridine(1915) in 23S rRNA + S-adenosyl-L-homocysteine + H(+). In terms of biological role, specifically methylates the pseudouridine at position 1915 (m3Psi1915) in 23S rRNA. This Mesoplasma florum (strain ATCC 33453 / NBRC 100688 / NCTC 11704 / L1) (Acholeplasma florum) protein is Ribosomal RNA large subunit methyltransferase H.